The primary structure comprises 293 residues: Pyridoxal 5'-phosphate synthase subunit PdxS (293 aa).

Residue D23 coordinates D-ribose 5-phosphate. Catalysis depends on K80, which acts as the Schiff-base intermediate with D-ribose 5-phosphate. Residue G152 participates in D-ribose 5-phosphate binding. Position 164 (R164) interacts with D-glyceraldehyde 3-phosphate. Residues G213 and 234-235 (GS) contribute to the D-ribose 5-phosphate site.

It belongs to the PdxS/SNZ family. In the presence of PdxT, forms a dodecamer of heterodimers.

The catalysed reaction is aldehydo-D-ribose 5-phosphate + D-glyceraldehyde 3-phosphate + L-glutamine = pyridoxal 5'-phosphate + L-glutamate + phosphate + 3 H2O + H(+). The protein operates within cofactor biosynthesis; pyridoxal 5'-phosphate biosynthesis. Functionally, catalyzes the formation of pyridoxal 5'-phosphate from ribose 5-phosphate (RBP), glyceraldehyde 3-phosphate (G3P) and ammonia. The ammonia is provided by the PdxT subunit. Can also use ribulose 5-phosphate and dihydroxyacetone phosphate as substrates, resulting from enzyme-catalyzed isomerization of RBP and G3P, respectively. The protein is Pyridoxal 5'-phosphate synthase subunit PdxS of Methanothermobacter thermautotrophicus (strain ATCC 29096 / DSM 1053 / JCM 10044 / NBRC 100330 / Delta H) (Methanobacterium thermoautotrophicum).